The sequence spans 302 residues: Recombination-associated protein RdgC (302 aa).

Belongs to the RdgC family.

It localises to the cytoplasm. Its subcellular location is the nucleoid. In terms of biological role, may be involved in recombination. The chain is Recombination-associated protein RdgC from Xylella fastidiosa (strain 9a5c).